The sequence spans 260 residues: 23S rRNA (guanosine-2'-O-)-methyltransferase RlmB (260 aa).

Gly-197, Ile-217, and Leu-226 together coordinate S-adenosyl-L-methionine.

Belongs to the class IV-like SAM-binding methyltransferase superfamily. RNA methyltransferase TrmH family. RlmB subfamily.

Its subcellular location is the cytoplasm. The catalysed reaction is guanosine(2251) in 23S rRNA + S-adenosyl-L-methionine = 2'-O-methylguanosine(2251) in 23S rRNA + S-adenosyl-L-homocysteine + H(+). In terms of biological role, specifically methylates the ribose of guanosine 2251 in 23S rRNA. The protein is 23S rRNA (guanosine-2'-O-)-methyltransferase RlmB of Nitrosomonas europaea (strain ATCC 19718 / CIP 103999 / KCTC 2705 / NBRC 14298).